A 404-amino-acid polypeptide reads, in one-letter code: Multidrug resistance protein MdtG (404 aa).

The next 11 helical transmembrane spans lie at 19 to 39 (LGCFLTGAAFSLVMPFLPLYV), 56 to 76 (LVFSITFLFSAIASPFWGGLA), 90 to 110 (LGMAIVMLLMGMAQNIWQFLI), 113 to 133 (ALLGLLGGFIPNANALIATQV), 144 to 164 (TLSTGGVSGALLGPLAGGLLA), 171 to 191 (PVFFITASVLFICFLLTFFFI), 222 to 242 (LFVTTLIIQVATGSIAPILTL), 254 to 274 (IAFISGMIASVPGVAALLSAP), 288 to 308 (ILIVALIISVLLLIPMSFVQT), 317 to 337 (FLLGAADGALLPAVQTLLVYN), and 376 to 396 (AVFCVTAGVVLFNAIYSWNSL).

The protein belongs to the major facilitator superfamily. DHA1 family. MdtG (TC 2.A.1.2.20) subfamily.

The protein resides in the cell inner membrane. The polypeptide is Multidrug resistance protein MdtG (Salmonella agona (strain SL483)).